Reading from the N-terminus, the 179-residue chain is GTP-dependent dephospho-CoA kinase (179 aa).

Residues aspartate 43, valine 45, aspartate 62, glutamate 120, and aspartate 143 each coordinate GTP.

It belongs to the GTP-dependent DPCK family.

It carries out the reaction 3'-dephospho-CoA + GTP = GDP + CoA + H(+). It functions in the pathway cofactor biosynthesis; coenzyme A biosynthesis. In terms of biological role, catalyzes the GTP-dependent phosphorylation of the 3'-hydroxyl group of dephosphocoenzyme A to form coenzyme A (CoA). The protein is GTP-dependent dephospho-CoA kinase of Haloarcula marismortui (strain ATCC 43049 / DSM 3752 / JCM 8966 / VKM B-1809) (Halobacterium marismortui).